We begin with the raw amino-acid sequence, 114 residues long: Abscisic stress-ripening protein 2 (114 aa).

2 disordered regions span residues 1–25 and 88–114; these read MAEE…GGPV and FHEH…HHHY. Basic residues predominate over residues 7-16; it reads QHHHHLFHHK. Residues 97 to 107 show a composition bias toward basic and acidic residues; that stretch reads AKKEKKEVEGG.

This sequence belongs to the abscisic acid and water stress-induced protein family.

This is Abscisic stress-ripening protein 2 from Solanum lycopersicum (Tomato).